An 89-amino-acid polypeptide reads, in one-letter code: Small ribosomal subunit protein uS17 (89 aa).

Belongs to the universal ribosomal protein uS17 family. As to quaternary structure, part of the 30S ribosomal subunit.

One of the primary rRNA binding proteins, it binds specifically to the 5'-end of 16S ribosomal RNA. The sequence is that of Small ribosomal subunit protein uS17 from Azoarcus sp. (strain BH72).